The following is a 745-amino-acid chain: Translation initiation factor IF-2 (745 aa).

The disordered stretch occupies residues 1–154 (MSDKPRRDTG…PAARPVVRPR (154 aa)). The segment covering 36–56 (TGRSPNASTGGNRSAGNQAGN) has biased composition (polar residues). Low complexity predominate over residues 68–98 (ATTPAPNRNTPPAGARQGGAANARTGTPPVA). Residues 99–113 (RGGGGGVTPPTGRGG) show a composition bias toward gly residues. Low complexity predominate over residues 114–126 (NNPRAARNQPRSR). A compositionally biased stretch (basic and acidic residues) spans 127–138 (QQPEEREREHVL). Residues 241–410 (PRPPVVTIMG…LLVADLEDLR (170 aa)) form the tr-type G domain. A G1 region spans residues 250–257 (GHVDHGKT). 250-257 (GHVDHGKT) serves as a coordination point for GTP. The interval 275–279 (GITQH) is G2. The tract at residues 296-299 (DTPG) is G3. GTP-binding positions include 296–300 (DTPGH) and 350–353 (NKID). A G4 region spans residues 350–353 (NKID). A G5 region spans residues 386–388 (SAR).

It belongs to the TRAFAC class translation factor GTPase superfamily. Classic translation factor GTPase family. IF-2 subfamily.

Its subcellular location is the cytoplasm. Functionally, one of the essential components for the initiation of protein synthesis. Protects formylmethionyl-tRNA from spontaneous hydrolysis and promotes its binding to the 30S ribosomal subunits. Also involved in the hydrolysis of GTP during the formation of the 70S ribosomal complex. The polypeptide is Translation initiation factor IF-2 (Chloroflexus aurantiacus (strain ATCC 29366 / DSM 635 / J-10-fl)).